A 452-amino-acid polypeptide reads, in one-letter code: Pup--protein ligase (452 aa).

Glu-9 is a Mg(2+) binding site. Residue Arg-53 coordinates ATP. Residue Tyr-55 coordinates Mg(2+). Catalysis depends on Asp-57, which acts as the Proton acceptor. Glu-63 contacts Mg(2+). Positions 66 and 419 each coordinate ATP.

This sequence belongs to the Pup ligase/Pup deamidase family. Pup-conjugating enzyme subfamily.

The catalysed reaction is ATP + [prokaryotic ubiquitin-like protein]-L-glutamate + [protein]-L-lysine = ADP + phosphate + N(6)-([prokaryotic ubiquitin-like protein]-gamma-L-glutamyl)-[protein]-L-lysine.. The protein operates within protein degradation; proteasomal Pup-dependent pathway. It functions in the pathway protein modification; protein pupylation. Functionally, catalyzes the covalent attachment of the prokaryotic ubiquitin-like protein modifier Pup to the proteasomal substrate proteins, thereby targeting them for proteasomal degradation. This tagging system is termed pupylation. The ligation reaction involves the side-chain carboxylate of the C-terminal glutamate of Pup and the side-chain amino group of a substrate lysine. This chain is Pup--protein ligase, found in Parafrankia sp. (strain EAN1pec).